A 139-amino-acid polypeptide reads, in one-letter code: Probable cytochrome b5 (139 aa).

Positions 2–78 constitute a Cytochrome b5 heme-binding domain; the sequence is SAEFTYQDVA…LEPLLVGTLK (77 aa). Positions 37 and 61 each coordinate heme. A helical membrane pass occupies residues 105–125; that stretch reads GLGIGLYAVLVLGGLAGFAAY.

This sequence belongs to the cytochrome b5 family.

It localises to the endoplasmic reticulum membrane. The protein resides in the microsome membrane. Its function is as follows. Membrane bound hemoprotein which function as an electron carrier for several membrane bound oxygenases. The sequence is that of Probable cytochrome b5 from Neurospora crassa (strain ATCC 24698 / 74-OR23-1A / CBS 708.71 / DSM 1257 / FGSC 987).